The following is a 154-amino-acid chain: MRCPFCAHDDSQVKDSRPTDDGAAIRRRRQCEGCGARFTTFERIQLREMTVVKSDGRREVFDRSKLERSISVACRKRPVDPARIERLATAIQRQIETSGDSEIPAASVGGMVMDGLKALDSVAYIRFASVYKDFREAKDFEDFAGAVSEAGRDG.

Residues 1 to 22 (MRCPFCAHDDSQVKDSRPTDDG) are disordered. The segment at 3–34 (CPFCAHDDSQVKDSRPTDDGAAIRRRRQCEGC) is a zinc-finger region. The span at 7-22 (AHDDSQVKDSRPTDDG) shows a compositional bias: basic and acidic residues. Positions 49 to 139 (MTVVKSDGRR…VYKDFREAKD (91 aa)) constitute an ATP-cone domain.

Belongs to the NrdR family. Zn(2+) is required as a cofactor.

Its function is as follows. Negatively regulates transcription of bacterial ribonucleotide reductase nrd genes and operons by binding to NrdR-boxes. This is Transcriptional repressor NrdR from Rhizorhabdus wittichii (strain DSM 6014 / CCUG 31198 / JCM 15750 / NBRC 105917 / EY 4224 / RW1) (Sphingomonas wittichii).